The sequence spans 187 residues: Adenine phosphoribosyltransferase (187 aa).

The protein belongs to the purine/pyrimidine phosphoribosyltransferase family. As to quaternary structure, homodimer.

Its subcellular location is the cytoplasm. It catalyses the reaction AMP + diphosphate = 5-phospho-alpha-D-ribose 1-diphosphate + adenine. Its pathway is purine metabolism; AMP biosynthesis via salvage pathway; AMP from adenine: step 1/1. Functionally, catalyzes a salvage reaction resulting in the formation of AMP, that is energically less costly than de novo synthesis. This Burkholderia pseudomallei (strain 1106a) protein is Adenine phosphoribosyltransferase.